Reading from the N-terminus, the 208-residue chain is Uracil phosphoribosyltransferase (208 aa).

Residues arginine 78, arginine 103, and aspartate 130–serine 138 contribute to the 5-phospho-alpha-D-ribose 1-diphosphate site. Residues isoleucine 193 and glycine 198 to alanine 200 contribute to the uracil site. 5-phospho-alpha-D-ribose 1-diphosphate is bound at residue aspartate 199.

It belongs to the UPRTase family. It depends on Mg(2+) as a cofactor.

The enzyme catalyses UMP + diphosphate = 5-phospho-alpha-D-ribose 1-diphosphate + uracil. It functions in the pathway pyrimidine metabolism; UMP biosynthesis via salvage pathway; UMP from uracil: step 1/1. Its activity is regulated as follows. Allosterically activated by GTP. Functionally, catalyzes the conversion of uracil and 5-phospho-alpha-D-ribose 1-diphosphate (PRPP) to UMP and diphosphate. The protein is Uracil phosphoribosyltransferase of Thermosipho melanesiensis (strain DSM 12029 / CIP 104789 / BI429).